A 338-amino-acid polypeptide reads, in one-letter code: uncharacterized protein (338 aa).

The next 3 helical transmembrane spans lie at 11-31 (ILSL…TFAI), 249-269 (IAVF…IIPA), and 318-338 (VPTP…GLGL).

It localises to the cell membrane. This is an uncharacterized protein from Methanocaldococcus jannaschii (strain ATCC 43067 / DSM 2661 / JAL-1 / JCM 10045 / NBRC 100440) (Methanococcus jannaschii).